The primary structure comprises 430 residues: UDP-N-acetylmuramoylalanine--D-glutamate ligase (430 aa).

Residue 109-115 (GTDGKST) coordinates ATP.

It belongs to the MurCDEF family.

The protein resides in the cytoplasm. The enzyme catalyses UDP-N-acetyl-alpha-D-muramoyl-L-alanine + D-glutamate + ATP = UDP-N-acetyl-alpha-D-muramoyl-L-alanyl-D-glutamate + ADP + phosphate + H(+). Its pathway is cell wall biogenesis; peptidoglycan biosynthesis. Functionally, cell wall formation. Catalyzes the addition of glutamate to the nucleotide precursor UDP-N-acetylmuramoyl-L-alanine (UMA). This Thermotoga sp. (strain RQ2) protein is UDP-N-acetylmuramoylalanine--D-glutamate ligase.